A 223-amino-acid polypeptide reads, in one-letter code: UPF0758 protein Plut_0598 (223 aa).

Residues 100–222 (RVQGAKDVFE…WFSFRESNLL (123 aa)) form the MPN domain. His171, His173, and Asp184 together coordinate Zn(2+). A JAMM motif motif is present at residues 171–184 (HNHPSGDTEPSNAD).

This sequence belongs to the UPF0758 family.

The chain is UPF0758 protein Plut_0598 from Chlorobium luteolum (strain DSM 273 / BCRC 81028 / 2530) (Pelodictyon luteolum).